Here is a 934-residue protein sequence, read N- to C-terminus: Sorting nexin-14 (934 aa).

The next 2 membrane-spanning stretches (helical) occupy residues Y27–Y47 and L48–L68. In terms of domain architecture, PXA spans P129 to P303. In terms of domain architecture, RGS spans D335–L467. In terms of domain architecture, PX spans W557–S677.

Belongs to the sorting nexin family.

It is found in the lysosome membrane. The protein resides in the late endosome membrane. Its subcellular location is the cell projection. The protein localises to the dendrite. Its function is as follows. Plays a role in maintaining normal neuronal excitability and synaptic transmission. May be involved in several stages of intracellular trafficking. Required for autophagosome clearance, possibly by mediating the fusion of lysosomes with autophagosomes. Binds phosphatidylinositol 3,5-bisphosphate (PtdIns(3,5)P2), a key component of late endosomes/lysosomes. Does not bind phosphatidylinositol 3-phosphate (PtdIns(3P)). This Danio rerio (Zebrafish) protein is Sorting nexin-14.